The chain runs to 37 residues: Large ribosomal subunit protein bL36 (37 aa).

The protein belongs to the bacterial ribosomal protein bL36 family.

The polypeptide is Large ribosomal subunit protein bL36 (Staphylococcus saprophyticus subsp. saprophyticus (strain ATCC 15305 / DSM 20229 / NCIMB 8711 / NCTC 7292 / S-41)).